A 310-amino-acid polypeptide reads, in one-letter code: Membrane protein insertase YidC 2 (310 aa).

The N-terminal stretch at 1–23 is a signal peptide; the sequence is MKKTLKRILFSSLSLSMLLLLTG. Residue Cys-24 is the site of N-palmitoyl cysteine attachment. The S-diacylglycerol cysteine moiety is linked to residue Cys-24. 5 consecutive transmembrane segments (helical) span residues 33 to 53, 58 to 78, 135 to 155, 180 to 200, and 219 to 239; these read PYGV…TYFA, LGFG…ILPL, FGGI…AIFF, LTVI…QGVP, and VFMS…GGIF. The interval 266 to 310 is disordered; sequence NPPKAYKANNARKDVTNSTKATESNQAIITSKKTNRNAGKQKRRG. The span at 281–297 shows a compositional bias: polar residues; it reads TNSTKATESNQAIITSK. Positions 298 to 310 are enriched in basic residues; sequence KTNRNAGKQKRRG.

Belongs to the OXA1/ALB3/YidC family. Type 2 subfamily.

The protein localises to the cell membrane. Required for the insertion and/or proper folding and/or complex formation of integral membrane proteins into the membrane. Involved in integration of membrane proteins that insert both dependently and independently of the Sec translocase complex, as well as at least some lipoproteins. In Streptococcus agalactiae serotype V (strain ATCC BAA-611 / 2603 V/R), this protein is Membrane protein insertase YidC 2.